Consider the following 181-residue polypeptide: Large ribosomal subunit protein uL5 (181 aa).

This sequence belongs to the universal ribosomal protein uL5 family. In terms of assembly, part of the 50S ribosomal subunit; part of the 5S rRNA/L5/L18/L25 subcomplex. Contacts the 5S rRNA and the P site tRNA. Forms a bridge to the 30S subunit in the 70S ribosome.

In terms of biological role, this is one of the proteins that bind and probably mediate the attachment of the 5S RNA into the large ribosomal subunit, where it forms part of the central protuberance. In the 70S ribosome it contacts protein S13 of the 30S subunit (bridge B1b), connecting the 2 subunits; this bridge is implicated in subunit movement. Contacts the P site tRNA; the 5S rRNA and some of its associated proteins might help stabilize positioning of ribosome-bound tRNAs. The sequence is that of Large ribosomal subunit protein uL5 from Mesomycoplasma hyopneumoniae (strain 7448) (Mycoplasma hyopneumoniae).